A 501-amino-acid polypeptide reads, in one-letter code: Cobyric acid synthase (501 aa).

A GATase cobBQ-type domain is found at 252 to 443; the sequence is DLDVAVIDLD…LHGIFDNPYW (192 aa). The active-site Nucleophile is cysteine 333. Histidine 435 is a catalytic residue.

It belongs to the CobB/CobQ family. CobQ subfamily.

Its pathway is cofactor biosynthesis; adenosylcobalamin biosynthesis. In terms of biological role, catalyzes amidations at positions B, D, E, and G on adenosylcobyrinic A,C-diamide. NH(2) groups are provided by glutamine, and one molecule of ATP is hydrogenolyzed for each amidation. This Limosilactobacillus reuteri (strain DSM 20016) (Lactobacillus reuteri) protein is Cobyric acid synthase.